Consider the following 495-residue polypeptide: Probable endopolygalacturonase D (495 aa).

A signal peptide spans 1 to 16 (MKRSALLASFLPLALG). A disulfide bridge links C154 with C169. PbH1 repeat units lie at residues 261-283 (MYNS…EIEN), 284-322 (TEYL…DIKQ), and 323-344 (SDFL…AVTS). An N-linked (GlcNAc...) asparagine glycan is attached at N295. D337 functions as the Proton donor in the catalytic mechanism. A disulfide bridge connects residues C339 and C355. The active site involves H359. A glycan (N-linked (GlcNAc...) asparagine) is linked at N371. PbH1 repeat units lie at residues 374–395 (VDGV…RIKS) and 403–425 (VYNV…DIQQ). 2 N-linked (GlcNAc...) asparagine glycosylation sites follow: N410 and N444. Cystine bridges form between C464–C469 and C487–C494. A PbH1 6 repeat occupies 469–492 (CSNFVFTDVDITGGSDDSCNYPSS).

It belongs to the glycosyl hydrolase 28 family.

It is found in the secreted. It carries out the reaction (1,4-alpha-D-galacturonosyl)n+m + H2O = (1,4-alpha-D-galacturonosyl)n + (1,4-alpha-D-galacturonosyl)m.. Its function is as follows. Involved in maceration and soft-rotting of plant tissue. Hydrolyzes the 1,4-alpha glycosidic bonds of de-esterified pectate in the smooth region of the plant cell wall. In Aspergillus niger (strain ATCC MYA-4892 / CBS 513.88 / FGSC A1513), this protein is Probable endopolygalacturonase D (pgaD).